A 298-amino-acid polypeptide reads, in one-letter code: 4-hydroxy-tetrahydrodipicolinate synthase (298 aa).

Thr48 lines the pyruvate pocket. The active-site Proton donor/acceptor is the Tyr137. Lys166 (schiff-base intermediate with substrate) is an active-site residue. Ile207 contributes to the pyruvate binding site.

It belongs to the DapA family. In terms of assembly, homotetramer; dimer of dimers.

It is found in the cytoplasm. It carries out the reaction L-aspartate 4-semialdehyde + pyruvate = (2S,4S)-4-hydroxy-2,3,4,5-tetrahydrodipicolinate + H2O + H(+). It participates in amino-acid biosynthesis; L-lysine biosynthesis via DAP pathway; (S)-tetrahydrodipicolinate from L-aspartate: step 3/4. Its function is as follows. Catalyzes the condensation of (S)-aspartate-beta-semialdehyde [(S)-ASA] and pyruvate to 4-hydroxy-tetrahydrodipicolinate (HTPA). In Campylobacter lari (strain RM2100 / D67 / ATCC BAA-1060), this protein is 4-hydroxy-tetrahydrodipicolinate synthase.